Here is a 263-residue protein sequence, read N- to C-terminus: 22 kDa alpha-zein 16 (263 aa).

An N-terminal signal peptide occupies residues 1-21 (MATKILALLALLALLVSATNA).

The protein belongs to the zein family. In terms of tissue distribution, expressed in developing endosperm.

In terms of biological role, zeins are major seed storage proteins. This chain is 22 kDa alpha-zein 16, found in Zea mays (Maize).